A 263-amino-acid chain; its full sequence is Type III pantothenate kinase (263 aa).

9–16 (DIGNTSIK) is an ATP binding site. Substrate contacts are provided by residues Tyr-103 and 110–113 (GADR). Asp-112 serves as the catalytic Proton acceptor. Asp-134 contributes to the K(+) binding site. An ATP-binding site is contributed by Thr-137. Position 190 (Thr-190) interacts with substrate.

This sequence belongs to the type III pantothenate kinase family. Homodimer. The cofactor is NH4(+). K(+) serves as cofactor.

Its subcellular location is the cytoplasm. It catalyses the reaction (R)-pantothenate + ATP = (R)-4'-phosphopantothenate + ADP + H(+). It functions in the pathway cofactor biosynthesis; coenzyme A biosynthesis; CoA from (R)-pantothenate: step 1/5. Functionally, catalyzes the phosphorylation of pantothenate (Pan), the first step in CoA biosynthesis. In Desulfovibrio desulfuricans (strain ATCC 27774 / DSM 6949 / MB), this protein is Type III pantothenate kinase.